Consider the following 134-residue polypeptide: MPFLELDTNLPANRVPAGLEKRLCAAAASILGKPADRVNVTVRPGLAMALSGSTEPCAQLSISSIGVVGTAEDNRSHSAHFFEFLTKELALGQDRFPTVLSTSPAAHGGPRCPGEIIEGKKSCLNEEALFIYFI.

It belongs to the MIF family.

It is found in the cytoplasm. Functionally, may have lyase activity. The protein is D-dopachrome decarboxylase-like protein (DDTL) of Homo sapiens (Human).